A 253-amino-acid chain; its full sequence is Imidazole glycerol phosphate synthase subunit HisF (253 aa).

Residues D11 and D130 contribute to the active site.

Belongs to the HisA/HisF family. As to quaternary structure, heterodimer of HisH and HisF.

The protein resides in the cytoplasm. The catalysed reaction is 5-[(5-phospho-1-deoxy-D-ribulos-1-ylimino)methylamino]-1-(5-phospho-beta-D-ribosyl)imidazole-4-carboxamide + L-glutamine = D-erythro-1-(imidazol-4-yl)glycerol 3-phosphate + 5-amino-1-(5-phospho-beta-D-ribosyl)imidazole-4-carboxamide + L-glutamate + H(+). The protein operates within amino-acid biosynthesis; L-histidine biosynthesis; L-histidine from 5-phospho-alpha-D-ribose 1-diphosphate: step 5/9. IGPS catalyzes the conversion of PRFAR and glutamine to IGP, AICAR and glutamate. The HisF subunit catalyzes the cyclization activity that produces IGP and AICAR from PRFAR using the ammonia provided by the HisH subunit. The protein is Imidazole glycerol phosphate synthase subunit HisF of Dinoroseobacter shibae (strain DSM 16493 / NCIMB 14021 / DFL 12).